A 277-amino-acid polypeptide reads, in one-letter code: Ribosomal RNA small subunit methyltransferase A (277 aa).

The S-adenosyl-L-methionine site is built by N24, L26, G51, E72, D96, and N123.

Belongs to the class I-like SAM-binding methyltransferase superfamily. rRNA adenine N(6)-methyltransferase family. RsmA subfamily.

The protein localises to the cytoplasm. The enzyme catalyses adenosine(1518)/adenosine(1519) in 16S rRNA + 4 S-adenosyl-L-methionine = N(6)-dimethyladenosine(1518)/N(6)-dimethyladenosine(1519) in 16S rRNA + 4 S-adenosyl-L-homocysteine + 4 H(+). In terms of biological role, specifically dimethylates two adjacent adenosines (A1518 and A1519) in the loop of a conserved hairpin near the 3'-end of 16S rRNA in the 30S particle. May play a critical role in biogenesis of 30S subunits. In Ureaplasma parvum serovar 3 (strain ATCC 27815 / 27 / NCTC 11736), this protein is Ribosomal RNA small subunit methyltransferase A.